The primary structure comprises 107 residues: U1-lycotoxin-Ls1b (107 aa).

Residues 1 to 20 (MMKVLVVFALLVTLISYSSS) form the signal peptide. Residues 21–41 (EGIDDLEADELLSLMANEQTR) constitute a propeptide that is removed on maturation. 4 cysteine pairs are disulfide-bonded: C44–C59, C51–C68, C58–C86, and C70–C84.

Belongs to the neurotoxin 19 (CSTX) family. 04 (U1-Lctx) subfamily. Expressed by the venom gland.

Its subcellular location is the secreted. This chain is U1-lycotoxin-Ls1b, found in Lycosa singoriensis (Wolf spider).